The following is a 746-amino-acid chain: MAGSRGAGRTAAPSVRPEKRRSEPELEPEPEPEPPLLCTSPLSHSTGSDSGVSDSEESVFSGLEDSGSDSSEDDDEGDEEGEDGALDDEGHSGIKKTTEEQVQASTPCPRTEMASARIGDEYAEDSSDEEDIRNTVGNVPLEWYDDFPHVGYDLDGRRIYKPLRTRDELDQFLDKMDDPDYWRTVQDPMTGRDLRLTDEQVALVRRLQSGQFGDVGFNPYEPAVDFFSGDVMIHPVTNRPADKRSFIPSLVEKEKVSRMVHAIKMGWIQPRRPRDPTPSFYDLWAQEDPNAVLGRHKMHVPAPKLALPGHAESYNPPPEYLLSEEERLAWEQQEPGERKLSFLPRKFPSLRAVPAYGRFIQERFERCLDLYLCPRQRKMRVNVDPEDLIPKLPRPRDLQPFPTCQALVYRGHSDLVRCLSVSPGGQWLVSGSDDGSLRLWEVATARCVRTVPVGGVVKSVAWNPSPAVCLVAAAVEDSVLLLNPALGDRLVAGSTDQLLSAFVPPEEPPLQPARWLEASEEERQVGLRLRICHGKPVTQVTWHGRGDYLAVVLATQGHTQVLIHQLSRRRSQSPFRRSHGQVQRVAFHPARPFLLVASQRSVRLYHLLRQELTKKLMPNCKWVSSLAVHPAGDNVICGSYDSKLVWFDLDLSTKPYRMLRHHKKALRAVAFHPRYPLFASGSDDGSVIVCHGMVYNDLLQNPLLVPVKVLKGHVLTRDLGVLDVIFHPTQPWVFSSGADGTVRLFT.

The interval 1–116 (MAGSRGAGRT…PCPRTEMASA (116 aa)) is disordered. A compositionally biased stretch (low complexity) spans 43 to 65 (SHSTGSDSGVSDSEESVFSGLED). Positions 66–87 (SGSDSSEDDDEGDEEGEDGALD) are enriched in acidic residues. A compositionally biased stretch (basic and acidic residues) spans 88 to 99 (DEGHSGIKKTTE). Residue Thr106 is modified to Phosphothreonine. Tyr122 is subject to Phosphotyrosine. A phosphoserine mark is found at Ser126 and Ser127. A sufficient for nucleolar localization region spans residues 265–427 (MGWIQPRRPR…CLSVSPGGQW (163 aa)). WD repeat units lie at residues 411-450 (GHSD…CVRT), 452-492 (PVGG…RLVA), 532-576 (CHGK…SPFR), 577-615 (RSHG…LTKK), 618-657 (PNCK…KPYR), 661-700 (HHKK…DLLQ), and 716-746 (TRDL…RLFT).

The protein belongs to the WD repeat BOP1/ERB1 family. As to quaternary structure, component of the PeBoW complex, composed of BOP1, PES1 and WDR12. The complex is held together by BOP1, which interacts with PES1 via its N-terminal domain and with WDR12 via a high-affinity interaction between the seven-bladed beta-propeller domains of the 2 proteins. The NOP7 complex associates with the 66S pre-ribosome. The PeBoW complex associates with DDX27, BOP1 interacts directly with DDX27.

Its subcellular location is the nucleus. The protein localises to the nucleolus. It localises to the nucleoplasm. Component of the PeBoW complex, which is required for maturation of 28S and 5.8S ribosomal RNAs and formation of the 60S ribosome. This Homo sapiens (Human) protein is Ribosome biogenesis protein BOP1.